Reading from the N-terminus, the 207-residue chain is Dephospho-CoA kinase (207 aa).

The 200-residue stretch at 4-203 folds into the DPCK domain; it reads VIGLTGGIAS…EEGYIEKPNY (200 aa). 12 to 17 is a binding site for ATP; sequence ASGKST.

This sequence belongs to the CoaE family.

Its subcellular location is the cytoplasm. It catalyses the reaction 3'-dephospho-CoA + ATP = ADP + CoA + H(+). It functions in the pathway cofactor biosynthesis; coenzyme A biosynthesis; CoA from (R)-pantothenate: step 5/5. In terms of biological role, catalyzes the phosphorylation of the 3'-hydroxyl group of dephosphocoenzyme A to form coenzyme A. This chain is Dephospho-CoA kinase, found in Staphylococcus aureus (strain bovine RF122 / ET3-1).